Reading from the N-terminus, the 173-residue chain is Large ribosomal subunit protein uL10 (173 aa).

This sequence belongs to the universal ribosomal protein uL10 family. Part of the ribosomal stalk of the 50S ribosomal subunit. The N-terminus interacts with L11 and the large rRNA to form the base of the stalk. The C-terminus forms an elongated spine to which L12 dimers bind in a sequential fashion forming a multimeric L10(L12)X complex.

In terms of biological role, forms part of the ribosomal stalk, playing a central role in the interaction of the ribosome with GTP-bound translation factors. The polypeptide is Large ribosomal subunit protein uL10 (Desulfatibacillum aliphaticivorans).